The sequence spans 246 residues: Probable transcriptional regulatory protein WP1214 (246 aa).

Positions M1–S22 are disordered.

The protein belongs to the TACO1 family.

The protein resides in the cytoplasm. The sequence is that of Probable transcriptional regulatory protein WP1214 from Wolbachia pipientis subsp. Culex pipiens (strain wPip).